The following is a 315-amino-acid chain: Prephenate dehydratase (315 aa).

The region spanning 3–189 (RIAYLGPEGT…ARTRFLLIGV (187 aa)) is the Prephenate dehydratase domain. In terms of domain architecture, ACT spans 203–280 (SAVLRIANVP…ADVRYLGSWP (78 aa)).

In terms of assembly, homodimer.

It catalyses the reaction prephenate + H(+) = 3-phenylpyruvate + CO2 + H2O. Its pathway is amino-acid biosynthesis; L-phenylalanine biosynthesis; phenylpyruvate from prephenate: step 1/1. This is Prephenate dehydratase (pheA) from Mycobacterium ulcerans (strain Agy99).